A 178-amino-acid chain; its full sequence is Endoribonuclease YbeY (178 aa).

Positions 118, 122, and 128 each coordinate Zn(2+). A disordered region spans residues 158–178 (ADRQSEKDRRLLDKSRYFDEP).

Belongs to the endoribonuclease YbeY family. Zn(2+) serves as cofactor.

It is found in the cytoplasm. Functionally, single strand-specific metallo-endoribonuclease involved in late-stage 70S ribosome quality control and in maturation of the 3' terminus of the 16S rRNA. The protein is Endoribonuclease YbeY of Mycolicibacterium smegmatis (strain ATCC 700084 / mc(2)155) (Mycobacterium smegmatis).